The sequence spans 447 residues: GTPase Der (447 aa).

EngA-type G domains follow at residues 3–167 (PVIA…FAER) and 181–354 (TRIA…AAAM). GTP contacts are provided by residues 9–16 (GRPNVGKS), 56–60 (DTGGF), 119–122 (NKAE), 187–194 (GRPNVGKS), 234–238 (DTAGL), and 299–302 (NKWD). In terms of domain architecture, KH-like spans 355–439 (VKLPTPKLTR…PLRIEFRTNK (85 aa)).

The protein belongs to the TRAFAC class TrmE-Era-EngA-EngB-Septin-like GTPase superfamily. EngA (Der) GTPase family. Associates with the 50S ribosomal subunit.

GTPase that plays an essential role in the late steps of ribosome biogenesis. The polypeptide is GTPase Der (Ralstonia pickettii (strain 12J)).